Reading from the N-terminus, the 425-residue chain is Serine--tRNA ligase (425 aa).

Residue 229-231 (TSE) coordinates L-serine. Residues 259–261 (RKE) and V275 contribute to the ATP site. An L-serine-binding site is contributed by E282. 349 to 352 (EVTS) contributes to the ATP binding site. T384 is an L-serine binding site.

Belongs to the class-II aminoacyl-tRNA synthetase family. Type-1 seryl-tRNA synthetase subfamily. Homodimer. The tRNA molecule binds across the dimer.

Its subcellular location is the cytoplasm. The catalysed reaction is tRNA(Ser) + L-serine + ATP = L-seryl-tRNA(Ser) + AMP + diphosphate + H(+). The enzyme catalyses tRNA(Sec) + L-serine + ATP = L-seryl-tRNA(Sec) + AMP + diphosphate + H(+). It participates in aminoacyl-tRNA biosynthesis; selenocysteinyl-tRNA(Sec) biosynthesis; L-seryl-tRNA(Sec) from L-serine and tRNA(Sec): step 1/1. Functionally, catalyzes the attachment of serine to tRNA(Ser). Is also able to aminoacylate tRNA(Sec) with serine, to form the misacylated tRNA L-seryl-tRNA(Sec), which will be further converted into selenocysteinyl-tRNA(Sec). This Borrelia garinii subsp. bavariensis (strain ATCC BAA-2496 / DSM 23469 / PBi) (Borreliella bavariensis) protein is Serine--tRNA ligase.